Here is a 119-residue protein sequence, read N- to C-terminus: Large ribosomal subunit protein bL20 (119 aa).

It belongs to the bacterial ribosomal protein bL20 family.

Functionally, binds directly to 23S ribosomal RNA and is necessary for the in vitro assembly process of the 50S ribosomal subunit. It is not involved in the protein synthesizing functions of that subunit. The protein is Large ribosomal subunit protein bL20 of Heliobacterium modesticaldum (strain ATCC 51547 / Ice1).